The chain runs to 192 residues: Probable GTP-binding protein EngB (192 aa).

The 171-residue stretch at 22–192 folds into the EngB-type G domain; that stretch reads QIPEIVFAGR…LLAHLAQYIR (171 aa). GTP contacts are provided by residues 30 to 37, 57 to 61, 75 to 78, 142 to 145, and 172 to 174; these read GRSNVGKS, GKTRL, DLPG, TKDD, and YSS. Mg(2+) is bound by residues Ser-37 and Thr-59.

It belongs to the TRAFAC class TrmE-Era-EngA-EngB-Septin-like GTPase superfamily. EngB GTPase family. Requires Mg(2+) as cofactor.

In terms of biological role, necessary for normal cell division and for the maintenance of normal septation. The chain is Probable GTP-binding protein EngB from Chlorobium phaeobacteroides (strain DSM 266 / SMG 266 / 2430).